The chain runs to 160 residues: Transcription elongation factor GreA (160 aa).

Positions 1–71 (MAEKTYPMTK…GQISTLETQI (71 aa)) form a coiled coil.

It belongs to the GreA/GreB family.

Its function is as follows. Necessary for efficient RNA polymerase transcription elongation past template-encoded arresting sites. The arresting sites in DNA have the property of trapping a certain fraction of elongating RNA polymerases that pass through, resulting in locked ternary complexes. Cleavage of the nascent transcript by cleavage factors such as GreA or GreB allows the resumption of elongation from the new 3'terminus. GreA releases sequences of 2 to 3 nucleotides. This is Transcription elongation factor GreA from Streptococcus uberis (strain ATCC BAA-854 / 0140J).